The following is a 459-amino-acid chain: Argininosuccinate lyase (459 aa).

Belongs to the lyase 1 family. Argininosuccinate lyase subfamily.

It localises to the cytoplasm. It catalyses the reaction 2-(N(omega)-L-arginino)succinate = fumarate + L-arginine. Its pathway is amino-acid biosynthesis; L-arginine biosynthesis; L-arginine from L-ornithine and carbamoyl phosphate: step 3/3. In Desulforudis audaxviator (strain MP104C), this protein is Argininosuccinate lyase.